The sequence spans 141 residues: Nucleoside diphosphate kinase (141 aa).

ATP is bound by residues K11, F59, R87, T93, R104, and N114. The active-site Pros-phosphohistidine intermediate is H117.

It belongs to the NDK family. In terms of assembly, homotetramer. Mg(2+) serves as cofactor.

Its subcellular location is the cytoplasm. It catalyses the reaction a 2'-deoxyribonucleoside 5'-diphosphate + ATP = a 2'-deoxyribonucleoside 5'-triphosphate + ADP. The catalysed reaction is a ribonucleoside 5'-diphosphate + ATP = a ribonucleoside 5'-triphosphate + ADP. Functionally, major role in the synthesis of nucleoside triphosphates other than ATP. The ATP gamma phosphate is transferred to the NDP beta phosphate via a ping-pong mechanism, using a phosphorylated active-site intermediate. In Paraburkholderia phytofirmans (strain DSM 17436 / LMG 22146 / PsJN) (Burkholderia phytofirmans), this protein is Nucleoside diphosphate kinase.